A 272-amino-acid polypeptide reads, in one-letter code: Deaminated glutathione amidase (272 aa).

The 253-residue stretch at 1–253 folds into the CN hydrolase domain; the sequence is MKPYLAAALQ…PGLAIAEINP (253 aa). Glutamate 43 (proton acceptor) is an active-site residue. Catalysis depends on lysine 115, which acts as the Proton donor. Cysteine 158 serves as the catalytic Nucleophile.

The protein belongs to the carbon-nitrogen hydrolase superfamily. NIT1/NIT2 family.

The catalysed reaction is N-(4-oxoglutaryl)-L-cysteinylglycine + H2O = L-cysteinylglycine + 2-oxoglutarate. Its function is as follows. Hydrolyzes deaminated glutathione (dGSH, 2-oxoglutaramate) to alpha-ketoglutarate (alpha-KG) and cysteinylglycine (specific activity 7.77 umol/min/mg), hydrolyzes alpha-ketoglutaramate (a-KGM, specific activity 2.13 umol/min/mg), has no activity on glutathione or L-glutamine. May function as a metabolite repair enzyme. In Synechocystis sp. (strain PCC 6803 / GT-S), this protein is Deaminated glutathione amidase.